Reading from the N-terminus, the 493-residue chain is Cobyric acid synthase (493 aa).

The region spanning 252–440 is the GATase cobBQ-type domain; sequence PVKIVVLRLR…IHGIFESDSL (189 aa). The Nucleophile role is filled by cysteine 333. Residue histidine 432 is part of the active site.

Belongs to the CobB/CobQ family. CobQ subfamily.

It participates in cofactor biosynthesis; adenosylcobalamin biosynthesis. In terms of biological role, catalyzes amidations at positions B, D, E, and G on adenosylcobyrinic A,C-diamide. NH(2) groups are provided by glutamine, and one molecule of ATP is hydrogenolyzed for each amidation. The polypeptide is Cobyric acid synthase (Thermodesulfovibrio yellowstonii (strain ATCC 51303 / DSM 11347 / YP87)).